The primary structure comprises 445 residues: Guanosine nucleotide diphosphate dissociation inhibitor At5g09550 (445 aa).

It belongs to the Rab GDI family.

In terms of biological role, regulates the GDP/GTP exchange reaction of most RAB proteins by inhibiting the dissociation of GDP from them, and the subsequent binding of GTP. This chain is Guanosine nucleotide diphosphate dissociation inhibitor At5g09550, found in Arabidopsis thaliana (Mouse-ear cress).